Reading from the N-terminus, the 606-residue chain is 4-hydroxy-3-methylbut-2-en-1-yl diphosphate synthase (flavodoxin) (606 aa).

[4Fe-4S] cluster-binding residues include cysteine 513, cysteine 516, cysteine 547, and glutamate 554.

It belongs to the IspG family. [4Fe-4S] cluster is required as a cofactor.

The catalysed reaction is (2E)-4-hydroxy-3-methylbut-2-enyl diphosphate + oxidized [flavodoxin] + H2O + 2 H(+) = 2-C-methyl-D-erythritol 2,4-cyclic diphosphate + reduced [flavodoxin]. The protein operates within isoprenoid biosynthesis; isopentenyl diphosphate biosynthesis via DXP pathway; isopentenyl diphosphate from 1-deoxy-D-xylulose 5-phosphate: step 5/6. Its function is as follows. Converts 2C-methyl-D-erythritol 2,4-cyclodiphosphate (ME-2,4cPP) into 1-hydroxy-2-methyl-2-(E)-butenyl 4-diphosphate. The protein is 4-hydroxy-3-methylbut-2-en-1-yl diphosphate synthase (flavodoxin) of Chlamydia abortus (strain DSM 27085 / S26/3) (Chlamydophila abortus).